Consider the following 1388-residue polypeptide: Collagen alpha-1(XV) chain (1388 aa).

A signal peptide spans methionine 1–threonine 27. Positions alanine 66–leucine 249 constitute a Laminin G-like domain. The interval threonine 223–glutamine 250 is disordered. The tract at residues arginine 229 to valine 555 is nonhelical region 1 (NC1). The span at serine 240–leucine 249 shows a compositional bias: polar residues. O-linked (Xyl...) (chondroitin sulfate) serine glycosylation is found at serine 243 and serine 247. A glycan (O-linked (GalNAc...) threonine) is linked at threonine 265. The tract at residues glutamine 266–threonine 301 is disordered. N-linked (GlcNAc...) asparagine glycosylation is found at asparagine 306 and asparagine 324. Serine 343 carries O-linked (Xyl...) (chondroitin sulfate) serine glycosylation. A run of 4 repeats spans residues alanine 358–leucine 408, alanine 409–leucine 459, threonine 460–leucine 509, and alanine 510–valine 555. Residues alanine 358–valine 555 form a 4 X tandem repeats region. The interval threonine 371–proline 795 is disordered. Residues serine 379–glutamate 392 show a composition bias toward polar residues. A compositionally biased stretch (low complexity) spans alanine 409–alanine 420. A compositionally biased stretch (polar residues) spans glycine 452–threonine 472. Residues alanine 510 to glycine 527 are compositionally biased toward low complexity. Residues serine 528–threonine 540 are compositionally biased toward pro residues. Residues glycine 556–glutamate 573 are triple-helical region 1 (COL1). The interval leucine 574–arginine 618 is nonhelical region 2 (NC2). The segment covering serine 595–aspartate 609 has biased composition (gly residues). Collagen-like domains are found at residues glycine 619 to glutamate 680 and lysine 681 to proline 731. The tract at residues glycine 619–glycine 732 is triple-helical region 2 (COL2). Residues proline 620 to proline 630 are compositionally biased toward pro residues. N-linked (GlcNAc...) asparagine glycosylation is present at asparagine 687. Positions valine 716–proline 731 are enriched in pro residues. The tract at residues cysteine 733–isoleucine 763 is nonhelical region 3 (NC3). Serine 745 carries an O-linked (Xyl...) (chondroitin sulfate) serine glycan. Residues glycine 764–isoleucine 798 are triple-helical region 3 (COL3). The segment covering lysine 766–methionine 780 has biased composition (basic and acidic residues). A nonhelical region 4 (NC4) region spans residues lysine 799 to valine 822. N-linked (GlcNAc...) asparagine glycosylation is found at asparagine 807 and asparagine 814. The Collagen-like 3 domain maps to glycine 823 to glycine 865. The interval glycine 823–isoleucine 867 is triple-helical region 4 (COL4). The segment covering proline 827–arginine 840 has biased composition (pro residues). Positions proline 827–proline 864 are disordered. The tract at residues leucine 868–methionine 878 is nonhelical region 5 (NC5). The region spanning glycine 879–glycine 927 is the Collagen-like 4 domain. The tract at residues glycine 879–valine 949 is triple-helical region 5 (COL5). The nonhelical region 6 (NC6) stretch occupies residues isoleucine 950–histidine 983. The interval glycine 984–proline 1013 is triple-helical region 6 (COL6). 2 disordered regions span residues glutamate 988 to leucine 1016 and glutamate 1029 to asparagine 1133. The segment at leucine 1014–lysine 1027 is nonhelical region 7 (NC7). The segment at glycine 1028–isoleucine 1045 is triple-helical region 7 (COL7). The span at glutamate 1029–aspartate 1044 shows a compositional bias: basic and acidic residues. Asparagine 1046 carries N-linked (GlcNAc...) asparagine glycosylation. The interval asparagine 1046 to serine 1052 is nonhelical region 8 (NC8). The segment at glycine 1053 to proline 1107 is triple-helical region 8 (COL8). 2 stretches are compositionally biased toward pro residues: residues glutamine 1075–proline 1107 and proline 1117–proline 1126. A nonhelical region 9 (NC9) region spans residues alanine 1108–proline 1117. The interval glycine 1118–arginine 1132 is triple-helical region 9 (COL9). Residues asparagine 1133–lysine 1388 are nonhelical region 10 (NC10). Cystine bridges form between cysteine 1237-cysteine 1377 and cysteine 1339-cysteine 1369.

The protein belongs to the multiplexin collagen family. In terms of assembly, trimer; disulfide-linked. Interacts moderately with EFEMP2. Prolines at the third position of the tripeptide repeating unit (G-X-Y) are hydroxylated in some or all of the chains. In terms of processing, O-glycosylated; with core 1 or possibly core 8 glycans. Contains chondroitin sulfate. Detected in fibroblasts and urine (at protein level). Detected in placenta (at protein level). Expressed predominantly in internal organs such as adrenal gland, pancreas and kidney.

Its subcellular location is the secreted. It is found in the extracellular space. The protein resides in the extracellular matrix. Structural protein that stabilizes microvessels and muscle cells, both in heart and in skeletal muscle. In terms of biological role, restin potently inhibits angiogenesis. The protein is Collagen alpha-1(XV) chain (COL15A1) of Homo sapiens (Human).